We begin with the raw amino-acid sequence, 357 residues long: Sorbitol dehydrogenase (357 aa).

Ala-2 is subject to N-acetylalanine. Zn(2+) is bound at residue Cys-45. Tyr-51 is a binding site for substrate. 2 residues coordinate Zn(2+): His-70 and Glu-71. Glu-156 is a substrate binding site. Positions 184, 204, and 209 each coordinate NAD(+). A phosphoserine mark is found at Ser-211 and Ser-225. NAD(+) contacts are provided by residues 273 to 275 (VGL) and 297 to 299 (VFR). Substrate contacts are provided by Arg-299 and Tyr-300.

Belongs to the zinc-containing alcohol dehydrogenase family. Homotetramer. Requires Zn(2+) as cofactor.

It is found in the mitochondrion membrane. It localises to the cell projection. Its subcellular location is the cilium. The protein localises to the flagellum. The enzyme catalyses xylitol + NAD(+) = D-xylulose + NADH + H(+). It catalyses the reaction L-iditol + NAD(+) = keto-L-sorbose + NADH + H(+). The catalysed reaction is keto-D-fructose + NADH + H(+) = D-sorbitol + NAD(+). Functionally, polyol dehydrogenase that catalyzes the reversible NAD(+)-dependent oxidation of various sugar alcohols. Is active with xylitol, L-iditol and D-sorbitol (D-glucitol) as substrates, leading to the C2-oxidized products D-xylulose, L-sorbose and D-fructose, respectively. Is a key enzyme in the polyol pathway that interconverts glucose and fructose via sorbitol, which constitutes an important alternate route for glucose metabolism. May play a role in sperm motility by using sorbitol as an alternative energy source for sperm motility. In Macaca fascicularis (Crab-eating macaque), this protein is Sorbitol dehydrogenase (SORD).